The following is a 303-amino-acid chain: 1D-myo-inositol 2-acetamido-2-deoxy-alpha-D-glucopyranoside deacetylase (303 aa).

Zn(2+) is bound by residues His13, Asp16, and His147.

Belongs to the MshB deacetylase family. The cofactor is Zn(2+).

The enzyme catalyses 1D-myo-inositol 2-acetamido-2-deoxy-alpha-D-glucopyranoside + H2O = 1D-myo-inositol 2-amino-2-deoxy-alpha-D-glucopyranoside + acetate. Catalyzes the deacetylation of 1D-myo-inositol 2-acetamido-2-deoxy-alpha-D-glucopyranoside (GlcNAc-Ins) in the mycothiol biosynthesis pathway. The sequence is that of 1D-myo-inositol 2-acetamido-2-deoxy-alpha-D-glucopyranoside deacetylase from Mycobacterium tuberculosis (strain ATCC 25177 / H37Ra).